Here is a 208-residue protein sequence, read N- to C-terminus: Dephospho-CoA kinase (208 aa).

Residues 8 to 208 (LVGVTGGIGS…VYQSLLTVVE (201 aa)) form the DPCK domain. Residue 16–21 (GSGKST) participates in ATP binding.

This sequence belongs to the CoaE family.

The protein localises to the cytoplasm. The catalysed reaction is 3'-dephospho-CoA + ATP = ADP + CoA + H(+). It participates in cofactor biosynthesis; coenzyme A biosynthesis; CoA from (R)-pantothenate: step 5/5. Functionally, catalyzes the phosphorylation of the 3'-hydroxyl group of dephosphocoenzyme A to form coenzyme A. This is Dephospho-CoA kinase from Chlorobaculum tepidum (strain ATCC 49652 / DSM 12025 / NBRC 103806 / TLS) (Chlorobium tepidum).